We begin with the raw amino-acid sequence, 606 residues long: Electron transfer flavoprotein-ubiquinone oxidoreductase, mitochondrial (606 aa).

Residue 59 to 73 (VVIVGAGPSGLSTAI) coordinates FAD. The chain crosses the membrane as a helical span at residues 448-468 (PSLHWGTIPGLIYGALEMYIF). Residues cysteine 551, cysteine 575, cysteine 578, and cysteine 581 each coordinate [4Fe-4S] cluster.

The protein belongs to the ETF-QO/FixC family. As to quaternary structure, monomer. It depends on [4Fe-4S] cluster as a cofactor. Requires FAD as cofactor.

It is found in the mitochondrion inner membrane. The catalysed reaction is a ubiquinone + reduced [electron-transfer flavoprotein] = a ubiquinol + oxidized [electron-transfer flavoprotein] + H(+). Its function is as follows. Accepts electrons from ETF and reduces ubiquinone. The chain is Electron transfer flavoprotein-ubiquinone oxidoreductase, mitochondrial (etfdh) from Dictyostelium discoideum (Social amoeba).